A 794-amino-acid polypeptide reads, in one-letter code: ALG-2 interacting protein X (794 aa).

The region spanning 1-385 is the BRO1 domain; it reads MLSIERKRTE…DNIEFHNQSA (385 aa). Coiled-coil stretches lie at residues 499–568 and 600–655; these read SFIR…LCKK and LNES…NLDE. The disordered stretch occupies residues 695–794; that stretch reads GVNPHSPLTS…PPYNSNNKHY (100 aa). The segment covering 698–712 has biased composition (low complexity); the sequence is PHSPLTSPSPSLQSP. Polar residues predominate over residues 713 to 722; it reads VNNYPNQFSS. Composition is skewed to low complexity over residues 723–742 and 749–764; these read PQYHTSPNQQQQQQQQYVPS and YSYNPQPYQPPQQFGG. A compositionally biased stretch (pro residues) spans 765–787; it reads PLPPPQSFSAPPPPQSFTAPPPY.

Self-associates; the interaction is calcium-independent Interacts with pefa; the interaction is calcium-dependent. Interacts with pefb; the interaction is calcium-dependent.

It is found in the cytoplasm. Its subcellular location is the cytoplasmic vesicle membrane. It localises to the endosome. Unknown. Required for development but not for cell death. The sequence is that of ALG-2 interacting protein X (alxA) from Dictyostelium discoideum (Social amoeba).